Consider the following 273-residue polypeptide: Dermonecrotic toxin LhSicTox-alphaIA2bi (273 aa).

2 residues coordinate Mg(2+): E25 and D27. H41 serves as the catalytic Nucleophile. Disulfide bonds link C45–C51 and C47–C190. Residue D85 coordinates Mg(2+).

Belongs to the arthropod phospholipase D family. Class II subfamily. Mg(2+) is required as a cofactor. Expressed by the venom gland.

Its subcellular location is the secreted. The catalysed reaction is an N-(acyl)-sphingosylphosphocholine = an N-(acyl)-sphingosyl-1,3-cyclic phosphate + choline. The enzyme catalyses an N-(acyl)-sphingosylphosphoethanolamine = an N-(acyl)-sphingosyl-1,3-cyclic phosphate + ethanolamine. It carries out the reaction a 1-acyl-sn-glycero-3-phosphocholine = a 1-acyl-sn-glycero-2,3-cyclic phosphate + choline. It catalyses the reaction a 1-acyl-sn-glycero-3-phosphoethanolamine = a 1-acyl-sn-glycero-2,3-cyclic phosphate + ethanolamine. Dermonecrotic toxins cleave the phosphodiester linkage between the phosphate and headgroup of certain phospholipids (sphingolipid and lysolipid substrates), forming an alcohol (often choline) and a cyclic phosphate. This toxin acts on sphingomyelin (SM). It may also act on ceramide phosphoethanolamine (CPE), lysophosphatidylcholine (LPC) and lysophosphatidylethanolamine (LPE), but not on lysophosphatidylserine (LPS), and lysophosphatidylglycerol (LPG). It acts by transphosphatidylation, releasing exclusively cyclic phosphate products as second products. Induces dermonecrosis, hemolysis, increased vascular permeability, edema, inflammatory response, and platelet aggregation. The polypeptide is Dermonecrotic toxin LhSicTox-alphaIA2bi (Loxosceles hirsuta (Recluse spider)).